The primary structure comprises 231 residues: ATP phosphoribosyltransferase (231 aa).

Belongs to the ATP phosphoribosyltransferase family. Short subfamily. As to quaternary structure, heteromultimer composed of HisG and HisZ subunits.

It is found in the cytoplasm. It carries out the reaction 1-(5-phospho-beta-D-ribosyl)-ATP + diphosphate = 5-phospho-alpha-D-ribose 1-diphosphate + ATP. The protein operates within amino-acid biosynthesis; L-histidine biosynthesis; L-histidine from 5-phospho-alpha-D-ribose 1-diphosphate: step 1/9. Functionally, catalyzes the condensation of ATP and 5-phosphoribose 1-diphosphate to form N'-(5'-phosphoribosyl)-ATP (PR-ATP). Has a crucial role in the pathway because the rate of histidine biosynthesis seems to be controlled primarily by regulation of HisG enzymatic activity. The sequence is that of ATP phosphoribosyltransferase (hisG) from Rhizobium meliloti (strain 1021) (Ensifer meliloti).